A 611-amino-acid polypeptide reads, in one-letter code: Histone acetyltransferase KAT7 (611 aa).

The interval 1 to 173 (MPRRKRNAGS…SDLSHRPKRR (173 aa)) is disordered. Ser10 is subject to Phosphoserine. The span at 42 to 57 (VTRSSARLSQSSQDSS) shows a compositional bias: low complexity. A phosphoserine; by ATR mark is found at Ser50 and Ser53. Ser57 carries the post-translational modification Phosphoserine; by PLK1. Ser64 bears the Phosphoserine mark. A phosphothreonine; by CDK1 mark is found at Thr85 and Thr88. Residues 96–105 (QTRSSGSETE) show a composition bias toward polar residues. Ser102 carries the phosphoserine modification. The residue at position 104 (Thr104) is a Phosphothreonine. Over residues 110–125 (FSDRETKNTADHDESP) the composition is skewed to basic and acidic residues. A phosphoserine mark is found at Ser111 and Ser124. Thr128 carries the phosphothreonine modification. Residues 134 to 145 (PSSESDIDISSP) are compositionally biased toward low complexity. Positions 148–168 (SHDESIAKDMSLKDSGSDLSH) are enriched in basic and acidic residues. Phosphoserine is present on residues Ser158, Ser162, Ser164, and Ser178. A CCHHC-type zinc finger spans residues 176–219 (HESYNFNMKCPTPGCNSLGHLTGKHERHFSISGCPLYHNLSADE). N6-acetyllysine is present on residues Lys199 and Lys277. A Glycyl lysine isopeptide (Lys-Gly) (interchain with G-Cter in SUMO2) cross-link involves residue Lys323. Residues 332-607 (EGSNMIKTIA…MDPSCLKWTP (276 aa)) enclose the MYST-type HAT domain. Lys338 is covalently cross-linked (Glycyl lysine isopeptide (Lys-Gly) (interchain with G-Cter in ubiquitin)). Residues 365-390 (LYMCEFCLKYMKSQTILRRHMAKCVW) form a C2HC MYST-type zinc finger. Cys368, Cys371, His384, and Cys388 together coordinate Zn(2+). At Lys432 the chain carries N6-acetyllysine; by autocatalysis. Residues 475-477 (ILT) and 483-488 (RQGYGK) each bind acetyl-CoA. Ser506 carries the post-translational modification Phosphoserine. The active-site Proton donor/acceptor is the Glu508. Acetyl-CoA-binding residues include Ser512 and Ser521.

This sequence belongs to the MYST (SAS/MOZ) family. As to quaternary structure, component of the HBO1 complex composed of KAT7/HBO1, MEAF6, ING4 or ING5, and one scaffold subunit: complexes containing BRPF scaffold (BRPF1, BRD1/BRPF2 or BRPF3) direct KAT7/HBO1 specificity towards H3K14ac, while complexes containing JADE scaffold (JADE1, JADE2 and JADE3) mediate acetylation of histone H4. Interacts with MCM2 and ORC1. Interacts with the androgen receptor (AR); in the presence of dihydrotestosterone. Interacts with CDT1. Interacts with MAP2K1 and CUL1. Interacts with p53/TP53; leading to inhibit histone acetyltransferase activity. Interacts with MIS18BP1. Phosphorylated at Ser-50 and Ser-53 by ATR in response to DNA damage, promoting its ubiquitination by the CRL4(DDB2) complex and subsequent degradation. Phosphorylation at Ser-50 and Ser-53 by ATR in response to ultraviolet-induced DNA, promotes localization to DNA damage sites. Phosphorylation at Ser-57 by PLK1 during mitosis seems important for prereplicative complex formation and DNA replication licensing, and requires prior phosphorylation at Thr-85 and Thr-88 by CDK1. Phosphorylated by MAP2K1, which accelerates its degradation. Post-translationally, ubiquitinated at Lys-338, leading to proteasomal degradation. Ubiquitinated by the CRL4(DDB2) complex following phosphorylation by ATR, leading to its subsequent degradation. In terms of processing, autoacetylation at Lys-432 is required for proper function. In terms of tissue distribution, ubiquitously expressed, with highest levels in testis.

It localises to the nucleus. It is found in the chromosome. The protein localises to the centromere. The protein resides in the cytoplasm. Its subcellular location is the cytosol. It catalyses the reaction L-lysyl-[histone] + acetyl-CoA = N(6)-acetyl-L-lysyl-[histone] + CoA + H(+). Its activity is regulated as follows. Histone acetyltransferase activity is inhibited by GMNN in the context of a complex with CDT1, inhibiting histone H4 acetylation and DNA replication licensing. Selectively inhibited by WM-3835 (N'-(4-fluoro-5-methyl-[1,1'-biphenyl]-3-carbonyl)-3- hydroxybenzenesulfonohydrazide) inhibitor. In terms of biological role, catalytic subunit of histone acetyltransferase HBO1 complexes, which specifically mediate acetylation of histone H3 at 'Lys-14' (H3K14ac), thereby regulating various processes, such as gene transcription, protein ubiquitination, immune regulation, stem cell pluripotent and self-renewal maintenance and embryonic development. Some complexes also catalyze acetylation of histone H4 at 'Lys-5', 'Lys-8' and 'Lys-12' (H4K5ac, H4K8ac and H4K12ac, respectively), regulating DNA replication initiation, regulating DNA replication initiation. Specificity of the HBO1 complexes is determined by the scaffold subunit: complexes containing BRPF scaffold (BRPF1, BRD1/BRPF2 or BRPF3) direct KAT7/HBO1 specificity towards H3K14ac, while complexes containing JADE (JADE1, JADE2 and JADE3) scaffold direct KAT7/HBO1 specificity towards histone H4. H3K14ac promotes transcriptional elongation by facilitating the processivity of RNA polymerase II. Acts as a key regulator of hematopoiesis by forming a complex with BRD1/BRPF2, directing KAT7/HBO1 specificity towards H3K14ac and promoting erythroid differentiation. H3K14ac is also required for T-cell development. KAT7/HBO1-mediated acetylation facilitates two consecutive steps, licensing and activation, in DNA replication initiation: H3K14ac facilitates the activation of replication origins, and histone H4 acetylation (H4K5ac, H4K8ac and H4K12ac) facilitates chromatin loading of MCM complexes, promoting DNA replication licensing. Acts as a positive regulator of centromeric CENPA assembly: recruited to centromeres and mediates histone acetylation, thereby preventing centromere inactivation mediated by SUV39H1, possibly by increasing histone turnover/exchange. Involved in nucleotide excision repair: phosphorylation by ATR in response to ultraviolet irradiation promotes its localization to DNA damage sites, where it mediates histone acetylation to facilitate recruitment of XPC at the damaged DNA sites. Acts as an inhibitor of NF-kappa-B independently of its histone acetyltransferase activity. Functionally, plays a central role in the maintenance of leukemia stem cells in acute myeloid leukemia (AML). Acts by mediating acetylation of histone H3 at 'Lys-14' (H3K14ac), thereby facilitating the processivity of RNA polymerase II to maintain the high expression of key genes, such as HOXA9 and HOXA10 that help to sustain the functional properties of leukemia stem cells. This chain is Histone acetyltransferase KAT7, found in Homo sapiens (Human).